A 171-amino-acid polypeptide reads, in one-letter code: Neuronal vesicle trafficking-associated protein 2 (171 aa).

The interval 1-21 (MVKLNGNPGEKGAKPPSVEDG) is disordered. Topologically, residues 1-71 (MVKLNGNPGE…FRVPKIAEFT (71 aa)) are cytoplasmic. Residues 72-92 (VTILVSLALAFLACIVFLVVY) traverse the membrane as a helical; Signal-anchor for type II membrane protein segment. Over 93–171 (KAFTYDHSCP…EPKPPKTQGH (79 aa)) the chain is Lumenal.

The protein belongs to the NSG family.

Its subcellular location is the membrane. It is found in the golgi apparatus. It localises to the trans-Golgi network membrane. The protein resides in the cell projection. The protein localises to the dendrite. Its subcellular location is the endosome membrane. It is found in the early endosome membrane. It localises to the late endosome membrane. The protein resides in the lysosome lumen. The protein localises to the cytoplasmic vesicle membrane. Its subcellular location is the golgi stack membrane. It is found in the endosome. It localises to the multivesicular body membrane. This is Neuronal vesicle trafficking-associated protein 2 from Rattus norvegicus (Rat).